The sequence spans 553 residues: Methionine--tRNA ligase (553 aa).

Residues 12-22 (PYANSQLHLGH) carry the 'HIGH' region motif. Zn(2+)-binding residues include Cys144, Cys147, Cys157, and Cys160. The short motif at 332–336 (KFSKS) is the 'KMSKS' region element. Residue Lys335 participates in ATP binding.

The protein belongs to the class-I aminoacyl-tRNA synthetase family. MetG type 1 subfamily. Monomer. Zn(2+) serves as cofactor.

It localises to the cytoplasm. It carries out the reaction tRNA(Met) + L-methionine + ATP = L-methionyl-tRNA(Met) + AMP + diphosphate. Its function is as follows. Is required not only for elongation of protein synthesis but also for the initiation of all mRNA translation through initiator tRNA(fMet) aminoacylation. This Dehalococcoides mccartyi (strain ATCC BAA-2266 / KCTC 15142 / 195) (Dehalococcoides ethenogenes (strain 195)) protein is Methionine--tRNA ligase.